We begin with the raw amino-acid sequence, 526 residues long: Peptide chain release factor 3 (526 aa).

The 270-residue stretch at 8 to 277 (GKRRTFAIIS…GLTEWAPAPQ (270 aa)) folds into the tr-type G domain. GTP is bound by residues 17 to 24 (SHPDAGKT), 85 to 89 (DTPGH), and 139 to 142 (NKMD).

Belongs to the TRAFAC class translation factor GTPase superfamily. Classic translation factor GTPase family. PrfC subfamily.

Its subcellular location is the cytoplasm. Increases the formation of ribosomal termination complexes and stimulates activities of RF-1 and RF-2. It binds guanine nucleotides and has strong preference for UGA stop codons. It may interact directly with the ribosome. The stimulation of RF-1 and RF-2 is significantly reduced by GTP and GDP, but not by GMP. In Aliivibrio salmonicida (strain LFI1238) (Vibrio salmonicida (strain LFI1238)), this protein is Peptide chain release factor 3.